Consider the following 195-residue polypeptide: COMM domain-containing protein 3 (195 aa).

A COMM domain is found at 124 to 193 (HITDVSWRLE…DASKSLERAT (70 aa)).

This sequence belongs to the COMM domain-containing protein 3 family. As to quaternary structure, component of the commander complex consisting of the CCC subcomplex and the retriever subcomplex. Component of the CCC (COMMD/CCDC22/CCDC93) subcomplex consisting of COMMD1, COMMD2, COMMD3, COMMD4, COMMD5, COMMD6, COMMD7, COMMD8, COMMD9, COMMD10, CCDC22 and CCDC93; within the complex forms a heterodimer with COMMD2. Interacts with NFKB1/p105. Interacts with CCDC22, CCDC93, SCNN1B, CUL3, CUL4A, CUL4B, CUL5. Expressed in kidney collecting duct cells and in the nuclei of proximal convoluted tubule cells in the kidney cortex (at protein level).

The protein localises to the cytoplasm. Its subcellular location is the nucleus. In terms of biological role, scaffold protein in the commander complex that is essential for endosomal recycling of transmembrane cargos; the commander complex is composed of the CCC subcomplex and the retriever subcomplex. May modulate activity of cullin-RING E3 ubiquitin ligase (CRL) complexes. May down-regulate activation of NF-kappa-B. Modulates Na(+) transport in epithelial cells by regulation of apical cell surface expression of amiloride-sensitive sodium channel (ENaC) subunits. In Rattus norvegicus (Rat), this protein is COMM domain-containing protein 3 (Commd3).